Consider the following 78-residue polypeptide: Small ribosomal subunit protein bS18 (78 aa).

This sequence belongs to the bacterial ribosomal protein bS18 family. As to quaternary structure, part of the 30S ribosomal subunit. Forms a tight heterodimer with protein bS6.

In terms of biological role, binds as a heterodimer with protein bS6 to the central domain of the 16S rRNA, where it helps stabilize the platform of the 30S subunit. This chain is Small ribosomal subunit protein bS18, found in Pediococcus pentosaceus (strain ATCC 25745 / CCUG 21536 / LMG 10740 / 183-1w).